The following is a 263-amino-acid chain: Endonuclease 8 (263 aa).

Catalysis depends on proline 2, which acts as the Schiff-base intermediate with DNA. Glutamate 3 functions as the Proton donor in the catalytic mechanism. The active-site Proton donor; for beta-elimination activity is lysine 53. Positions 70, 125, and 169 each coordinate DNA. The FPG-type zinc-finger motif lies at 229–263 (KVFHRDGEACERCGGIIEKTTLSSRPFYWCPHCQK). Arginine 253 (proton donor; for delta-elimination activity) is an active-site residue.

Belongs to the FPG family. The cofactor is Zn(2+).

The enzyme catalyses 2'-deoxyribonucleotide-(2'-deoxyribose 5'-phosphate)-2'-deoxyribonucleotide-DNA = a 3'-end 2'-deoxyribonucleotide-(2,3-dehydro-2,3-deoxyribose 5'-phosphate)-DNA + a 5'-end 5'-phospho-2'-deoxyribonucleoside-DNA + H(+). Involved in base excision repair of DNA damaged by oxidation or by mutagenic agents. Acts as a DNA glycosylase that recognizes and removes damaged bases. Has a preference for oxidized pyrimidines, such as thymine glycol, 5,6-dihydrouracil and 5,6-dihydrothymine. Has AP (apurinic/apyrimidinic) lyase activity and introduces nicks in the DNA strand. Cleaves the DNA backbone by beta-delta elimination to generate a single-strand break at the site of the removed base with both 3'- and 5'-phosphates. The polypeptide is Endonuclease 8 (Salmonella schwarzengrund (strain CVM19633)).